We begin with the raw amino-acid sequence, 247 residues long: Triosephosphate isomerase (247 aa).

Residue 9-11 (NWK) participates in substrate binding. Histidine 94 acts as the Electrophile in catalysis. Glutamate 166 serves as the catalytic Proton acceptor. Substrate is bound by residues glycine 172, serine 211, and 232–233 (GG).

This sequence belongs to the triosephosphate isomerase family. In terms of assembly, homodimer.

It is found in the cytoplasm. It catalyses the reaction D-glyceraldehyde 3-phosphate = dihydroxyacetone phosphate. It functions in the pathway carbohydrate biosynthesis; gluconeogenesis. Its pathway is carbohydrate degradation; glycolysis; D-glyceraldehyde 3-phosphate from glycerone phosphate: step 1/1. Its function is as follows. Involved in the gluconeogenesis. Catalyzes stereospecifically the conversion of dihydroxyacetone phosphate (DHAP) to D-glyceraldehyde-3-phosphate (G3P). The chain is Triosephosphate isomerase from Cupriavidus taiwanensis (strain DSM 17343 / BCRC 17206 / CCUG 44338 / CIP 107171 / LMG 19424 / R1) (Ralstonia taiwanensis (strain LMG 19424)).